Consider the following 231-residue polypeptide: 5'-methylthioadenosine/S-adenosylhomocysteine nucleosidase (231 aa).

Glutamate 12 functions as the Proton acceptor in the catalytic mechanism. Residues glycine 78, valine 153, and 174–175 (ME) contribute to the substrate site. Catalysis depends on aspartate 198, which acts as the Proton donor.

The protein belongs to the PNP/UDP phosphorylase family. MtnN subfamily.

It carries out the reaction S-adenosyl-L-homocysteine + H2O = S-(5-deoxy-D-ribos-5-yl)-L-homocysteine + adenine. The enzyme catalyses S-methyl-5'-thioadenosine + H2O = 5-(methylsulfanyl)-D-ribose + adenine. It catalyses the reaction 5'-deoxyadenosine + H2O = 5-deoxy-D-ribose + adenine. It functions in the pathway amino-acid biosynthesis; L-methionine biosynthesis via salvage pathway; S-methyl-5-thio-alpha-D-ribose 1-phosphate from S-methyl-5'-thioadenosine (hydrolase route): step 1/2. Its function is as follows. Catalyzes the irreversible cleavage of the glycosidic bond in both 5'-methylthioadenosine (MTA) and S-adenosylhomocysteine (SAH/AdoHcy) to adenine and the corresponding thioribose, 5'-methylthioribose and S-ribosylhomocysteine, respectively. Also cleaves 5'-deoxyadenosine, a toxic by-product of radical S-adenosylmethionine (SAM) enzymes, into 5-deoxyribose and adenine. The protein is 5'-methylthioadenosine/S-adenosylhomocysteine nucleosidase of Aliivibrio salmonicida (strain LFI1238) (Vibrio salmonicida (strain LFI1238)).